A 626-amino-acid chain; its full sequence is Putative L-type lectin-domain containing receptor kinase V.8 (626 aa).

Positions 1-21 are cleaved as a signal peptide; that stretch reads MPSELKVLHIVLVLLYTLSSS. Residues 22–212 form a legume-lectin like region; sequence TYNSNGNWTL…SIGAFHYMLS (191 aa). The Extracellular segment spans residues 22-245; that stretch reads TYNSNGNWTL…PKKSSDRTKK (224 aa). Residues Asn28, Asn59, Asn112, and Asn162 are each glycosylated (N-linked (GlcNAc...) asparagine). The chain crosses the membrane as a helical span at residues 246–266; sequence ILAVCLTLAVFAVFVASGICF. Over 267 to 626 the chain is Cytoplasmic; that stretch reads VFYTRHKKVK…LTNSFLSHGR (360 aa). One can recognise a Protein kinase domain in the interval 303–562; sequence FKEKQLLGKG…GLLCAHHTEL (260 aa). ATP contacts are provided by residues 309–317 and Lys332; that span reads LGKGGFGQV. The active-site Proton acceptor is the Asp429.

The protein in the C-terminal section; belongs to the protein kinase superfamily. Ser/Thr protein kinase family. It in the N-terminal section; belongs to the leguminous lectin family.

It localises to the cell membrane. It carries out the reaction L-seryl-[protein] + ATP = O-phospho-L-seryl-[protein] + ADP + H(+). It catalyses the reaction L-threonyl-[protein] + ATP = O-phospho-L-threonyl-[protein] + ADP + H(+). The polypeptide is Putative L-type lectin-domain containing receptor kinase V.8 (LECRK58) (Arabidopsis thaliana (Mouse-ear cress)).